The sequence spans 340 residues: Phosphoribosylformylglycinamidine cyclo-ligase (340 aa).

This sequence belongs to the AIR synthase family.

It localises to the cytoplasm. The catalysed reaction is 2-formamido-N(1)-(5-O-phospho-beta-D-ribosyl)acetamidine + ATP = 5-amino-1-(5-phospho-beta-D-ribosyl)imidazole + ADP + phosphate + H(+). Its pathway is purine metabolism; IMP biosynthesis via de novo pathway; 5-amino-1-(5-phospho-D-ribosyl)imidazole from N(2)-formyl-N(1)-(5-phospho-D-ribosyl)glycinamide: step 2/2. In Lactococcus lactis subsp. cremoris (strain MG1363), this protein is Phosphoribosylformylglycinamidine cyclo-ligase.